Here is a 1169-residue protein sequence, read N- to C-terminus: Protein qua-1 (1169 aa).

Residues 1-22 (MRRLSAILPILLLSNFWPTVES) form the signal peptide. Disordered regions lie at residues 261-338 (GATG…AGTN) and 368-933 (AGGV…RTSS). A compositionally biased stretch (low complexity) spans 278-292 (ESNGNNNNSFEGGRS). Residues 312-337 (GAGGKGGAGADGAAGSGAGAGAGAGT) are compositionally biased toward gly residues. 2 stretches are compositionally biased toward acidic residues: residues 426-437 (DEEDEEDNGDED) and 453-464 (DDGDGDEDDDGT). Positions 511–523 (SPDDNDLLEKDEN) are enriched in basic and acidic residues. Composition is skewed to gly residues over residues 526 to 536 (NGKGGAGNGNG), 545 to 572 (KGNGTGDGDGDGNGNGNGLTGDGNGTGD), 605 to 634 (DGNGNGTGDGNGDGNDNGNGSKGLGTGSGD), 656 to 700 (GSNG…GGTG), and 727 to 752 (NAEGNGKGNGNDGKGSGSGDGSGAGG). The segment covering 753 to 774 (KGDKSDSESGNEADGKDGKKNE) has biased composition (basic and acidic residues). Residues 775-791 (GAGGEAAAGSGGANKGG) show a composition bias toward gly residues. Residues 793–803 (DGDDDDVDVTD) show a composition bias toward acidic residues. A compositionally biased stretch (polar residues) spans 840-855 (GTVQTGAKHNAESSAS). Residues 889–906 (SGTSESVTNGSGATESGS) show a composition bias toward low complexity. A compositionally biased stretch (gly residues) spans 907 to 923 (TGSGTTGTGTSGTGSSG). Residues 924 to 933 (TGASAARTSS) show a composition bias toward low complexity.

As to expression, transiently expressed in head cells.

The protein resides in the cytoplasmic vesicle. Its subcellular location is the secreted. It is found in the extracellular space. It localises to the extracellular matrix. Required for cuticle shedding and normal alae morphology and localization, and subsequently larval development. In Caenorhabditis elegans, this protein is Protein qua-1.